A 259-amino-acid polypeptide reads, in one-letter code: Indole-3-glycerol phosphate synthase (259 aa).

The protein belongs to the TrpC family.

The enzyme catalyses 1-(2-carboxyphenylamino)-1-deoxy-D-ribulose 5-phosphate + H(+) = (1S,2R)-1-C-(indol-3-yl)glycerol 3-phosphate + CO2 + H2O. Its pathway is amino-acid biosynthesis; L-tryptophan biosynthesis; L-tryptophan from chorismate: step 4/5. The polypeptide is Indole-3-glycerol phosphate synthase (Dehalococcoides mccartyi (strain ATCC BAA-2100 / JCM 16839 / KCTC 5957 / BAV1)).